The sequence spans 468 residues: Proline--tRNA ligase (468 aa).

The protein belongs to the class-II aminoacyl-tRNA synthetase family. ProS type 3 subfamily. As to quaternary structure, homodimer.

The protein resides in the cytoplasm. The catalysed reaction is tRNA(Pro) + L-proline + ATP = L-prolyl-tRNA(Pro) + AMP + diphosphate. Its function is as follows. Catalyzes the attachment of proline to tRNA(Pro) in a two-step reaction: proline is first activated by ATP to form Pro-AMP and then transferred to the acceptor end of tRNA(Pro). The protein is Proline--tRNA ligase of Frankia casuarinae (strain DSM 45818 / CECT 9043 / HFP020203 / CcI3).